We begin with the raw amino-acid sequence, 793 residues long: Calcium permeable stress-gated cation channel 1 (793 aa).

Residues 1-21 are Lumenal-facing; sequence MAFNGYGIFDSDPRKNPSSDL. Residues 22–42 traverse the membrane as a helical segment; that stretch reads RTQFWLAFLLGASACVFFCFF. Topologically, residues 43–95 are cytoplasmic; it reads RKRWKVLYAPRTTIEGLNLPTLSSSYYKWLMDLVNIPDDVVQNCAGLDGYVFL. A helical transmembrane segment spans residues 96-116; the sequence is LFFKMGIKFLSFASLLGVLII. Residues 117–192 lie on the Lumenal side of the membrane; it reads MPVNKHFRGD…IPGLPQPGDG (76 aa). A helical transmembrane segment spans residues 193-213; it reads FLYLYVLFTYFISIFLLYVLF. Residues 214–444 are Cytoplasmic-facing; sequence SSTKSIADIR…HKFFQGWFIT (231 aa). Residues 445–465 traverse the membrane as a helical segment; that stretch reads LVTFMIILLWTVPVGAIAVFI. Residues 466-493 are Lumenal-facing; sequence NLDTIRRLWPELGRMIEDLPFLNSLLRT. Residues 494–514 traverse the membrane as a helical segment; it reads FLPTLVYSLFISISPFLFRWL. The Cytoplasmic segment spans residues 515–534; that stretch reads SSMQGLSSRAEEEIYAVGKN. Residues 535-555 traverse the membrane as a helical segment; the sequence is YAYLFVNFFLVYVIAGSTSIW. At 556–577 the chain is on the lumenal side; sequence ELAKDTTSFAHFLANRLPHQAQ. Residues 578–598 traverse the membrane as a helical segment; that stretch reads FFIDLIVLQGIGMFPLKLIQL. Topologically, residues 599–646 are cytoplasmic; it reads GKLSSYFVRRSFVPYSIASKKFETPDSFSVGIFLPQPMFIMLICLCYS. The helical transmembrane segment at 647-667 threads the bilayer; the sequence is IISPLILVFGLIYFIIGFLVY. The Lumenal portion of the chain corresponds to 668–687; sequence KYELIYQMEHPQHSTGELWS. Residues 688-708 traverse the membrane as a helical segment; the sequence is TIFLRMIFGCVIMQLTMMGLM. The Cytoplasmic portion of the chain corresponds to 709-713; it reads SLRKA. The helical transmembrane segment at 714-734 threads the bilayer; sequence YWLSTVIFPLLCFTVISAYNF. Over 735–793 the chain is Lumenal; sequence STMIRSSMQFVSLYYIRTHQSNTLSSESESRNSESSGSYVHPGFDLSNEELPLIDLNTA. Residues 759-778 are disordered; that stretch reads SSESESRNSESSGSYVHPGF.

This sequence belongs to the CSC1 (TC 1.A.17) family.

Its subcellular location is the vacuole membrane. Functionally, acts as an osmosensitive calcium-permeable cation channel. This chain is Calcium permeable stress-gated cation channel 1, found in Schizosaccharomyces pombe (strain 972 / ATCC 24843) (Fission yeast).